The sequence spans 1043 residues: Rho GTPase-activating protein gacZ (1043 aa).

The disordered stretch occupies residues 1–44 (MTTTNTSIFGPRVNNSKFNNNNNNNNNNNNNNNNTSNNNNSNII). Positions 14–44 (NNSKFNNNNNNNNNNNNNNNNTSNNNNSNII) are enriched in low complexity. Zn(2+) is bound by residues cysteine 71, cysteine 74, cysteine 82, cysteine 85, cysteine 91, histidine 95, histidine 103, and cysteine 107. The MYND-type; atypical zinc finger occupies 71-107 (CVICKSKNVQVCTGCLMVYYCGAEHQNIDWPNHKSLC). Disordered stretches follow at residues 137–163 (SGNR…NNNN), 199–532 (HLQQ…NNSN), 546–594 (DGLS…NGNR), 614–690 (FYQS…TNNN), 706–772 (NTSQ…QLSA), and 801–842 (NKVS…NNNN). Positions 201–225 (QQQIQQTQQTQQQPPPTTTSIPTQP) are enriched in low complexity. Residues 241 to 253 (SFKSSSSGDNTPI) show a composition bias toward polar residues. 2 stretches are compositionally biased toward low complexity: residues 254 to 293 (NQSP…NMSG) and 307 to 411 (NSIN…TNEE). The span at 453 to 466 (GTLKQSSSSDSIYF) shows a compositional bias: polar residues. Composition is skewed to low complexity over residues 467 to 532 (NNNN…NNSN) and 547 to 594 (GLSY…NGNR). The segment covering 615–625 (YQSNKNQSNGY) has biased composition (polar residues). The segment covering 644-671 (ENDDSHEECDDDDDDDDGGGQDGDDGLD) has biased composition (acidic residues). 4 stretches are compositionally biased toward low complexity: residues 726–736 (DTQSQSTNSTT), 752–771 (SSDD…SQLS), 801–821 (NKVS…NNNN), and 829–842 (NNNN…NNNN). The stretch at 825–852 (DHNENNNNNNNNINNNNNNNNNNIENII) forms a coiled coil. Positions 855–1043 (IPLEEAVKKS…FGIQTYNYNS (189 aa)) constitute a Rho-GAP domain.

The protein resides in the cytoplasm. In terms of biological role, rho GTPase-activating protein involved in the signal transduction pathway. The polypeptide is Rho GTPase-activating protein gacZ (gacZ) (Dictyostelium discoideum (Social amoeba)).